The chain runs to 160 residues: Ribonuclease HI (160 aa).

The RNase H type-1 domain maps to 4-147 (TPNSVTLYTD…CDRLAVAAYQ (144 aa)). D13, E52, D74, and D139 together coordinate Mg(2+).

The protein belongs to the RNase H family. In terms of assembly, monomer. Mg(2+) is required as a cofactor.

The protein resides in the cytoplasm. The catalysed reaction is Endonucleolytic cleavage to 5'-phosphomonoester.. Its function is as follows. Endonuclease that specifically degrades the RNA of RNA-DNA hybrids. This Synechocystis sp. (strain ATCC 27184 / PCC 6803 / Kazusa) protein is Ribonuclease HI (rnhA).